A 420-amino-acid chain; its full sequence is 3-isopropylmalate dehydratase large subunit (420 aa).

[4Fe-4S] cluster contacts are provided by Cys301, Cys361, and Cys364.

Belongs to the aconitase/IPM isomerase family. LeuC type 2 subfamily. Heterodimer of LeuC and LeuD. Requires [4Fe-4S] cluster as cofactor.

It carries out the reaction (2R,3S)-3-isopropylmalate = (2S)-2-isopropylmalate. Its pathway is amino-acid biosynthesis; L-leucine biosynthesis; L-leucine from 3-methyl-2-oxobutanoate: step 2/4. Catalyzes the isomerization between 2-isopropylmalate and 3-isopropylmalate, via the formation of 2-isopropylmaleate. In Desulfovibrio desulfuricans (strain ATCC 27774 / DSM 6949 / MB), this protein is 3-isopropylmalate dehydratase large subunit.